A 231-amino-acid chain; its full sequence is Large ribosomal subunit protein uL1 (231 aa).

The protein belongs to the universal ribosomal protein uL1 family. Part of the 50S ribosomal subunit.

In terms of biological role, binds directly to 23S rRNA. The L1 stalk is quite mobile in the ribosome, and is involved in E site tRNA release. Its function is as follows. Protein L1 is also a translational repressor protein, it controls the translation of the L11 operon by binding to its mRNA. The protein is Large ribosomal subunit protein uL1 of Desulforudis audaxviator (strain MP104C).